A 374-amino-acid chain; its full sequence is Erythronate-4-phosphate dehydrogenase (374 aa).

Substrate contacts are provided by serine 45 and threonine 67. NAD(+) is bound at residue aspartate 147. Arginine 208 is an active-site residue. Aspartate 232 lines the NAD(+) pocket. Glutamate 237 is an active-site residue. Histidine 254 serves as the catalytic Proton donor. An NAD(+)-binding site is contributed by glycine 257.

This sequence belongs to the D-isomer specific 2-hydroxyacid dehydrogenase family. PdxB subfamily. Homodimer.

The protein localises to the cytoplasm. It catalyses the reaction 4-phospho-D-erythronate + NAD(+) = (R)-3-hydroxy-2-oxo-4-phosphooxybutanoate + NADH + H(+). It functions in the pathway cofactor biosynthesis; pyridoxine 5'-phosphate biosynthesis; pyridoxine 5'-phosphate from D-erythrose 4-phosphate: step 2/5. Functionally, catalyzes the oxidation of erythronate-4-phosphate to 3-hydroxy-2-oxo-4-phosphonooxybutanoate. This chain is Erythronate-4-phosphate dehydrogenase, found in Pseudoalteromonas atlantica (strain T6c / ATCC BAA-1087).